The chain runs to 229 residues: GTP cyclohydrolase 1 (229 aa).

The disordered stretch occupies residues 1-21 (MDAKIKPLRAGKSADARTDFQ). Residues cysteine 118, histidine 121, and cysteine 189 each coordinate Zn(2+).

The protein belongs to the GTP cyclohydrolase I family. As to quaternary structure, toroid-shaped homodecamer, composed of two pentamers of five dimers.

The enzyme catalyses GTP + H2O = 7,8-dihydroneopterin 3'-triphosphate + formate + H(+). It functions in the pathway cofactor biosynthesis; 7,8-dihydroneopterin triphosphate biosynthesis; 7,8-dihydroneopterin triphosphate from GTP: step 1/1. The polypeptide is GTP cyclohydrolase 1 (Rhodopseudomonas palustris (strain HaA2)).